The primary structure comprises 666 residues: Vicilin-like antimicrobial peptides 2-2 (666 aa).

An N-terminal signal peptide occupies residues 1-27 (MAINTSNLCSLLFLLSLFLLSTTVSLA). Disordered regions lie at residues 161–191 (QQKR…DPQQ) and 221–251 (RQHG…SDNP). The span at 239–251 (RYEEGEEKQSDNP) shows a compositional bias: basic and acidic residues. Cupin type-1 domains follow at residues 271-410 (SVLE…ERLR) and 455-625 (YNLF…KEVE).

The protein belongs to the 7S seed storage protein family.

It localises to the secreted. Its function is as follows. Antimicrobial peptides 2b, 2c and 2d have antibacterial and antifungal activity against a range of species. This is Vicilin-like antimicrobial peptides 2-2 from Macadamia integrifolia (Macadamia nut).